We begin with the raw amino-acid sequence, 390 residues long: Transforming growth factor beta-1 proprotein (390 aa).

The first 29 residues, Met1–Gly29, serve as a signal peptide directing secretion. Positions Leu30–Pro74 are straightjacket domain. The interval Glu75 to Leu271 is arm domain. Residues Asn82, Asn136, and Asn176 are each glycosylated (N-linked (GlcNAc...) asparagine). The tract at residues Asp226–Gly252 is bowtie tail. The Cell attachment site motif lies at Arg244 to Asp246. 4 cysteine pairs are disulfide-bonded: Cys285-Cys294, Cys293-Cys356, Cys322-Cys387, and Cys326-Cys389.

This sequence belongs to the TGF-beta family. In terms of assembly, homodimer; disulfide-linked. Interacts with the serine proteases, HTRA1 and HTRA3: the interaction with either inhibits TGFB1-mediated signaling and the HTRA protease activity is required for this inhibition. May interact with THSD4; this interaction may lead to sequestration by FBN1 microfibril assembly and attenuation of TGFB signaling. Interacts with CD109, DPT and ASPN. Interacts with EFEMP2. Interacts with TSKU; the interaction contributes to regulation of the hair cycle. Homodimer; disulfide-linked. Interacts with transforming growth factor beta-1 (TGF-beta-1) chain; interaction is non-covalent and maintains TGF-beta-1 in a latent state; each latency-associated peptide (LAP) monomer interacts with TGF-beta-1 in the other monomer. Interacts with LTBP1; leading to regulation of TGF-beta-1 activation. Interacts with LRRC32/GARP; leading to regulation of TGF-beta-1 activation on the surface of activated regulatory T-cells (Tregs). Interacts with LRRC33/NRROS; leading to regulation of TGF-beta-1 in macrophages and microglia. Interacts (via cell attachment site) with integrins ITGAV and ITGB6 (ITGAV:ITGB6), leading to release of the active TGF-beta-1. Interacts with NREP; the interaction results in a decrease in TGFB1 autoinduction. Interacts with HSP90AB1; inhibits latent TGFB1 activation. Interact with PSG9; leading to TGFB1 activation. Interacts with TGFBR3. As to quaternary structure, homodimer; disulfide-linked. Interacts with TGF-beta receptors (TGFBR1 and TGFBR2), leading to signal transduction. Post-translationally, transforming growth factor beta-1 proprotein: The precursor proprotein is cleaved in the Golgi apparatus by FURIN to form Transforming growth factor beta-1 (TGF-beta-1) and Latency-associated peptide (LAP) chains, which remain non-covalently linked, rendering TGF-beta-1 inactive. In terms of processing, N-glycosylated. Deglycosylation leads to activation of Transforming growth factor beta-1 (TGF-beta-1); mechanisms triggering deglycosylation-driven activation of TGF-beta-1 are however unclear. In terms of tissue distribution, highly expressed in bone. Abundantly expressed in articular cartilage and chondrocytes and is increased in osteoarthritis (OA). Colocalizes with ASPN in chondrocytes within OA lesions of articular cartilage.

It localises to the secreted. The protein localises to the extracellular space. It is found in the extracellular matrix. Transforming growth factor beta-1 proprotein: Precursor of the Latency-associated peptide (LAP) and Transforming growth factor beta-1 (TGF-beta-1) chains, which constitute the regulatory and active subunit of TGF-beta-1, respectively. In terms of biological role, required to maintain the Transforming growth factor beta-1 (TGF-beta-1) chain in a latent state during storage in extracellular matrix. Associates non-covalently with TGF-beta-1 and regulates its activation via interaction with 'milieu molecules', such as LTBP1, LRRC32/GARP and LRRC33/NRROS, that control activation of TGF-beta-1. Interaction with LRRC33/NRROS regulates activation of TGF-beta-1 in macrophages and microglia. Interaction with LRRC32/GARP controls activation of TGF-beta-1 on the surface of activated regulatory T-cells (Tregs). Interaction with integrins (ITGAV:ITGB6 or ITGAV:ITGB8) results in distortion of the Latency-associated peptide chain and subsequent release of the active TGF-beta-1. Functionally, multifunctional protein that regulates the growth and differentiation of various cell types and is involved in various processes, such as normal development, immune function, microglia function and responses to neurodegeneration. Activation into mature form follows different steps: following cleavage of the proprotein in the Golgi apparatus, Latency-associated peptide (LAP) and Transforming growth factor beta-1 (TGF-beta-1) chains remain non-covalently linked rendering TGF-beta-1 inactive during storage in extracellular matrix. At the same time, LAP chain interacts with 'milieu molecules', such as LTBP1, LRRC32/GARP and LRRC33/NRROS that control activation of TGF-beta-1 and maintain it in a latent state during storage in extracellular milieus. TGF-beta-1 is released from LAP by integrins (ITGAV:ITGB6 or ITGAV:ITGB8): integrin-binding to LAP stabilizes an alternative conformation of the LAP bowtie tail and results in distortion of the LAP chain and subsequent release of the active TGF-beta-1. Once activated following release of LAP, TGF-beta-1 acts by binding to TGF-beta receptors (TGFBR1 and TGFBR2), which transduce signal. While expressed by many cells types, TGF-beta-1 only has a very localized range of action within cell environment thanks to fine regulation of its activation by Latency-associated peptide chain (LAP) and 'milieu molecules'. Plays an important role in bone remodeling: acts as a potent stimulator of osteoblastic bone formation, causing chemotaxis, proliferation and differentiation in committed osteoblasts. Can promote either T-helper 17 cells (Th17) or regulatory T-cells (Treg) lineage differentiation in a concentration-dependent manner. At high concentrations, leads to FOXP3-mediated suppression of RORC and down-regulation of IL-17 expression, favoring Treg cell development. At low concentrations in concert with IL-6 and IL-21, leads to expression of the IL-17 and IL-23 receptors, favoring differentiation to Th17 cells. Stimulates sustained production of collagen through the activation of CREB3L1 by regulated intramembrane proteolysis (RIP). Mediates SMAD2/3 activation by inducing its phosphorylation and subsequent translocation to the nucleus. Positively regulates odontoblastic differentiation in dental papilla cells, via promotion of IPO7-mediated translocation of phosphorylated SMAD2 to the nucleus and subsequent transcription of target genes. Can induce epithelial-to-mesenchymal transition (EMT) and cell migration in various cell types. In Homo sapiens (Human), this protein is Transforming growth factor beta-1 proprotein.